The sequence spans 207 residues: MATIDVFDINKNKVGEMDLSDAVFNGDVREYLIHEAVKVQLANRRAGTVGVKNRAAVSGGGKKPFKQKGTGQARQGCIRAPHYVGGGVAFGPQAKTYALSMNKKARKAAVRSALSMLFKENKLSVLDCLSLPSISTKGFVGVLKTFDVTKTLVIIDEANTNLELSARNVKDVKVLKAEHLNVFDIVKFNNIILTQSAVRKIEGALQS.

This sequence belongs to the universal ribosomal protein uL4 family. Part of the 50S ribosomal subunit.

In terms of biological role, one of the primary rRNA binding proteins, this protein initially binds near the 5'-end of the 23S rRNA. It is important during the early stages of 50S assembly. It makes multiple contacts with different domains of the 23S rRNA in the assembled 50S subunit and ribosome. Its function is as follows. Forms part of the polypeptide exit tunnel. The chain is Large ribosomal subunit protein uL4 from Geobacter metallireducens (strain ATCC 53774 / DSM 7210 / GS-15).